We begin with the raw amino-acid sequence, 394 residues long: L-lactate 2-monooxygenase (394 aa).

Residues 19-394 (VAPTLPMSYA…LTIDALRPTR (376 aa)) enclose the FMN hydroxy acid dehydrogenase domain. Residue Tyr45 coordinates a 2-oxocarboxylate. Residues 98-100 (PIG), Ser129, and Gln151 contribute to the FMN site. Residue Tyr153 coordinates a 2-oxocarboxylate. FMN is bound at residue Thr179. Arg188 serves as a coordination point for a 2-oxocarboxylate. Lys267 contacts FMN. His291 acts as the Proton acceptor in catalysis. An a 2-oxocarboxylate-binding site is contributed by Arg294. FMN-binding positions include 321-325 (DSGIR) and Arg345.

The protein belongs to the FMN-dependent alpha-hydroxy acid dehydrogenase family. In terms of assembly, homotetramer. It depends on FMN as a cofactor.

The enzyme catalyses (S)-lactate + O2 = acetate + CO2 + H2O. Its function is as follows. Catalyzes the oxidative decarboxylation of (S)-lactate (L-lactate) to acetate and carbon dioxide. Its physiological role remains unknown. The polypeptide is L-lactate 2-monooxygenase (Mycolicibacterium smegmatis (Mycobacterium smegmatis)).